Consider the following 70-residue polypeptide: uncharacterized protein (70 aa).

This is an uncharacterized protein from Rickettsia conorii (strain ATCC VR-613 / Malish 7).